Reading from the N-terminus, the 559-residue chain is Acetolactate synthase, catabolic (559 aa).

FAD-binding positions include R159, 263–284, and 304–323; these read FNNQ…IGYS and DVLP…LVGD. Position 447 (D447) interacts with Mg(2+).

It belongs to the TPP enzyme family. In terms of assembly, homodimer.

The catalysed reaction is 2 pyruvate + H(+) = (2S)-2-acetolactate + CO2. It participates in polyol metabolism; (R,R)-butane-2,3-diol biosynthesis; (R,R)-butane-2,3-diol from pyruvate: step 1/3. This is Acetolactate synthase, catabolic (budB) from Raoultella terrigena (Klebsiella terrigena).